Reading from the N-terminus, the 284-residue chain is tRNA uridine(34) hydroxylase (284 aa).

Positions 132–226 constitute a Rhodanese domain; that stretch reads TGRPVVMLDT…YFEEVGGAHY (95 aa). Catalysis depends on Cys-186, which acts as the Cysteine persulfide intermediate.

This sequence belongs to the TrhO family.

The enzyme catalyses uridine(34) in tRNA + AH2 + O2 = 5-hydroxyuridine(34) in tRNA + A + H2O. Its function is as follows. Catalyzes oxygen-dependent 5-hydroxyuridine (ho5U) modification at position 34 in tRNAs. The protein is tRNA uridine(34) hydroxylase of Burkholderia lata (strain ATCC 17760 / DSM 23089 / LMG 22485 / NCIMB 9086 / R18194 / 383).